The primary structure comprises 51 residues: Putative ribosomal protein eL39-like 5 (51 aa).

The protein belongs to the eukaryotic ribosomal protein eL39 family.

In Homo sapiens (Human), this protein is Putative ribosomal protein eL39-like 5 (RPL39P5).